Reading from the N-terminus, the 215-residue chain is Probable transaldolase (215 aa).

The Schiff-base intermediate with substrate role is filled by Lys83.

It belongs to the transaldolase family. Type 3B subfamily.

Its subcellular location is the cytoplasm. It carries out the reaction D-sedoheptulose 7-phosphate + D-glyceraldehyde 3-phosphate = D-erythrose 4-phosphate + beta-D-fructose 6-phosphate. Its pathway is carbohydrate degradation; pentose phosphate pathway; D-glyceraldehyde 3-phosphate and beta-D-fructose 6-phosphate from D-ribose 5-phosphate and D-xylulose 5-phosphate (non-oxidative stage): step 2/3. Functionally, transaldolase is important for the balance of metabolites in the pentose-phosphate pathway. This Desulforudis audaxviator (strain MP104C) protein is Probable transaldolase.